The sequence spans 358 residues: uncharacterized protein (358 aa).

207-214 contacts ATP; sequence AAVKDGKT.

This is an uncharacterized protein from Bacillus subtilis (strain 168).